A 463-amino-acid chain; its full sequence is MADFIVKDLSLADFGRKELDIAETEMPGLMALREEFGASKPLKGARIAGSLHMTVQTAVLIETLVALGADVRWASCNIFSTQDHAAAAIAASGVPVFAIKGETLEDYWAYTDKIFQFADGTCNMILDDGGDATLYILLGARVEAGETDLIAVPQSDEEVCLFNQIRKRMAETPGWFTKQRDAIKGVSEETTTGVHRLYDLHKKGLLPFPAINVNDSVTKSKFDNKYGCKESLVDGIRRATDVMMAGKVAVVCGYGDVGKGSAASLRGAGARVKVTEVDPICALQAAMDGFEVVVLEDVVQDADIFITTTGNRDVIRIEHMREMKDMAIVGNIGHFDNEIQVAALKNHKWTNIKDQVDMIEMPSGSRIILLSEGRLLNLGNATGHPSFVMSASFTNQVLAQIELWTKGADYQPGVYILPKALDEKVARLHLKKIGVKLTDVRPEQADYIGVKVEGPFKAEHYRY.

3 residues coordinate substrate: Thr54, Asp128, and Glu189. An NAD(+)-binding site is contributed by Thr190–Thr192. Substrate is bound by residues Lys219 and Asp223. Residues Asn224, Gly253–Gly258, Glu276, Asn311, Ile332–His334, and Asn377 contribute to the NAD(+) site.

It belongs to the adenosylhomocysteinase family. NAD(+) serves as cofactor.

Its subcellular location is the cytoplasm. The enzyme catalyses S-adenosyl-L-homocysteine + H2O = L-homocysteine + adenosine. It functions in the pathway amino-acid biosynthesis; L-homocysteine biosynthesis; L-homocysteine from S-adenosyl-L-homocysteine: step 1/1. Its function is as follows. May play a key role in the regulation of the intracellular concentration of adenosylhomocysteine. The chain is Adenosylhomocysteinase from Cereibacter sphaeroides (Rhodobacter sphaeroides).